We begin with the raw amino-acid sequence, 350 residues long: 2-oxoglutarate-dependent ethylene/succinate-forming enzyme (350 aa).

The Fe2OG dioxygenase domain occupies 166–286 (GWHHMRVLRF…RFACAYFHEP (121 aa)). The Fe cation site is built by His189 and His268.

The protein belongs to the iron/ascorbate-dependent oxidoreductase family. Monomer. The cofactor is Fe(2+).

It carries out the reaction 2-oxoglutarate + O2 + 2 H(+) = ethene + 3 CO2 + H2O. It catalyses the reaction L-arginine + 2-oxoglutarate + O2 = guanidine + L-glutamate 5-semialdehyde + succinate + CO2. It participates in alkene biosynthesis; ethylene biosynthesis via 2-oxoglutarate. In terms of biological role, simultaneously catalyzes two reactions, namely formation of ethylene and of succinate from 2-oxoglutarate. This Pseudomonas amygdali pv. sesami (Pseudomonas syringae pv. sesami) protein is 2-oxoglutarate-dependent ethylene/succinate-forming enzyme (efe).